Here is a 362-residue protein sequence, read N- to C-terminus: 3-isopropylmalate dehydrogenase (362 aa).

77 to 88 (GPKWGTGSVRPE) contributes to the NAD(+) binding site. Substrate-binding residues include R95, R105, R134, and D223. Mg(2+) is bound by residues D223, D248, and D252. 287-298 (GSAPDLPKGKVN) provides a ligand contact to NAD(+).

The protein belongs to the isocitrate and isopropylmalate dehydrogenases family. Homodimer. The cofactor is Mg(2+). It depends on Mn(2+) as a cofactor.

It is found in the cytoplasm. It carries out the reaction (2R,3S)-3-isopropylmalate + NAD(+) = 4-methyl-2-oxopentanoate + CO2 + NADH. It participates in amino-acid biosynthesis; L-leucine biosynthesis; L-leucine from 3-methyl-2-oxobutanoate: step 3/4. Its function is as follows. Catalyzes the oxidation of 3-carboxy-2-hydroxy-4-methylpentanoate (3-isopropylmalate) to 3-carboxy-4-methyl-2-oxopentanoate. The product decarboxylates to 4-methyl-2 oxopentanoate. This is 3-isopropylmalate dehydrogenase (LEU2) from Zygosaccharomyces rouxii (strain ATCC 2623 / CBS 732 / NBRC 1130 / NCYC 568 / NRRL Y-229).